Here is a 1065-residue protein sequence, read N- to C-terminus: Isoleucine--tRNA ligase (1065 aa).

The 'HIGH' region signature appears at 49 to 59 (PYVSGAIHLGT). The short motif at 625-629 (KMSKS) is the 'KMSKS' region element. K628 contributes to the ATP binding site.

Belongs to the class-I aminoacyl-tRNA synthetase family. IleS type 2 subfamily. As to quaternary structure, monomer. Requires Zn(2+) as cofactor.

The protein resides in the cytoplasm. It catalyses the reaction tRNA(Ile) + L-isoleucine + ATP = L-isoleucyl-tRNA(Ile) + AMP + diphosphate. Its function is as follows. Catalyzes the attachment of isoleucine to tRNA(Ile). As IleRS can inadvertently accommodate and process structurally similar amino acids such as valine, to avoid such errors it has two additional distinct tRNA(Ile)-dependent editing activities. One activity is designated as 'pretransfer' editing and involves the hydrolysis of activated Val-AMP. The other activity is designated 'posttransfer' editing and involves deacylation of mischarged Val-tRNA(Ile). The sequence is that of Isoleucine--tRNA ligase from Thermococcus kodakarensis (strain ATCC BAA-918 / JCM 12380 / KOD1) (Pyrococcus kodakaraensis (strain KOD1)).